The chain runs to 274 residues: Thymidylate synthase (274 aa).

A dUMP-binding site is contributed by Arg-21. Residue His-51 coordinates (6R)-5,10-methylene-5,6,7,8-tetrahydrofolate. 123-124 (RR) contributes to the dUMP binding site. Catalysis depends on Cys-156, which acts as the Nucleophile. DUMP contacts are provided by residues 176 to 179 (RSAD), Asn-187, and 217 to 219 (HIY). Asp-179 contacts (6R)-5,10-methylene-5,6,7,8-tetrahydrofolate. Ala-273 lines the (6R)-5,10-methylene-5,6,7,8-tetrahydrofolate pocket.

The protein belongs to the thymidylate synthase family. Bacterial-type ThyA subfamily. Homodimer.

The protein resides in the cytoplasm. The catalysed reaction is dUMP + (6R)-5,10-methylene-5,6,7,8-tetrahydrofolate = 7,8-dihydrofolate + dTMP. The protein operates within pyrimidine metabolism; dTTP biosynthesis. Catalyzes the reductive methylation of 2'-deoxyuridine-5'-monophosphate (dUMP) to 2'-deoxythymidine-5'-monophosphate (dTMP) while utilizing 5,10-methylenetetrahydrofolate (mTHF) as the methyl donor and reductant in the reaction, yielding dihydrofolate (DHF) as a by-product. This enzymatic reaction provides an intracellular de novo source of dTMP, an essential precursor for DNA biosynthesis. The polypeptide is Thymidylate synthase (Flavobacterium psychrophilum (strain ATCC 49511 / DSM 21280 / CIP 103535 / JIP02/86)).